The following is a 207-amino-acid chain: Ribosomal RNA small subunit methyltransferase G (207 aa).

Residues G74, F79, 124–125, and R138 contribute to the S-adenosyl-L-methionine site; that span reads VE.

The protein belongs to the methyltransferase superfamily. RNA methyltransferase RsmG family.

It is found in the cytoplasm. The catalysed reaction is guanosine(527) in 16S rRNA + S-adenosyl-L-methionine = N(7)-methylguanosine(527) in 16S rRNA + S-adenosyl-L-homocysteine. Specifically methylates the N7 position of guanine in position 527 of 16S rRNA. The polypeptide is Ribosomal RNA small subunit methyltransferase G (Hyphomonas neptunium (strain ATCC 15444)).